Reading from the N-terminus, the 289-residue chain is 4-diphosphocytidyl-2-C-methyl-D-erythritol kinase (289 aa).

Lys10 is a catalytic residue. Position 94–104 (94–104) interacts with ATP; sequence PVAAGLAGGSS. Residue Asp136 is part of the active site.

It belongs to the GHMP kinase family. IspE subfamily.

The catalysed reaction is 4-CDP-2-C-methyl-D-erythritol + ATP = 4-CDP-2-C-methyl-D-erythritol 2-phosphate + ADP + H(+). It participates in isoprenoid biosynthesis; isopentenyl diphosphate biosynthesis via DXP pathway; isopentenyl diphosphate from 1-deoxy-D-xylulose 5-phosphate: step 3/6. Functionally, catalyzes the phosphorylation of the position 2 hydroxy group of 4-diphosphocytidyl-2C-methyl-D-erythritol. The protein is 4-diphosphocytidyl-2-C-methyl-D-erythritol kinase of Geobacillus sp. (strain WCH70).